The sequence spans 360 residues: GTP 3',8-cyclase 2 (360 aa).

Residues 33–259 form the Radical SAM core domain; sequence TFGRVANDLR…PDPAPRGSAP (227 aa). Position 42 (Arg42) interacts with GTP. Positions 49 and 53 each coordinate [4Fe-4S] cluster. An S-adenosyl-L-methionine-binding site is contributed by Tyr55. [4Fe-4S] cluster is bound at residue Cys56. Arg93 contributes to the GTP binding site. Residue Gly97 participates in S-adenosyl-L-methionine binding. A GTP-binding site is contributed by Thr124. Ser148 lines the S-adenosyl-L-methionine pocket. Lys185 provides a ligand contact to GTP. Met219 lines the S-adenosyl-L-methionine pocket. The [4Fe-4S] cluster site is built by Cys287 and Cys290. Residue 292-294 coordinates GTP; it reads RTR. [4Fe-4S] cluster is bound at residue Cys304.

It belongs to the radical SAM superfamily. MoaA family. Monomer and homodimer. [4Fe-4S] cluster is required as a cofactor.

The enzyme catalyses GTP + AH2 + S-adenosyl-L-methionine = (8S)-3',8-cyclo-7,8-dihydroguanosine 5'-triphosphate + 5'-deoxyadenosine + L-methionine + A + H(+). It functions in the pathway cofactor biosynthesis; molybdopterin biosynthesis. In terms of biological role, catalyzes the cyclization of GTP to (8S)-3',8-cyclo-7,8-dihydroguanosine 5'-triphosphate. The protein is GTP 3',8-cyclase 2 of Mycobacterium bovis (strain ATCC BAA-935 / AF2122/97).